A 37-amino-acid chain; its full sequence is MTTISNLPAIFVPLVGLVFPAIAMVSLSLHVQKNKIF.

The chain crosses the membrane as a helical span at residues 7 to 27 (LPAIFVPLVGLVFPAIAMVSL).

It belongs to the PsaI family.

The protein localises to the plastid. It localises to the chloroplast thylakoid membrane. Its function is as follows. May help in the organization of the PsaL subunit. This Morus indica (Mulberry) protein is Photosystem I reaction center subunit VIII.